The following is a 251-amino-acid chain: 5'-nucleotidase SurE (251 aa).

4 residues coordinate a divalent metal cation: Asp-8, Asp-9, Ser-39, and Asn-95.

Belongs to the SurE nucleotidase family. It depends on a divalent metal cation as a cofactor.

Its subcellular location is the cytoplasm. It catalyses the reaction a ribonucleoside 5'-phosphate + H2O = a ribonucleoside + phosphate. Nucleotidase that shows phosphatase activity on nucleoside 5'-monophosphates. This chain is 5'-nucleotidase SurE, found in Ralstonia pickettii (strain 12J).